The primary structure comprises 299 residues: Phosphoribosylaminoimidazole-succinocarboxamide synthase (299 aa).

This sequence belongs to the SAICAR synthetase family.

It carries out the reaction 5-amino-1-(5-phospho-D-ribosyl)imidazole-4-carboxylate + L-aspartate + ATP = (2S)-2-[5-amino-1-(5-phospho-beta-D-ribosyl)imidazole-4-carboxamido]succinate + ADP + phosphate + 2 H(+). Its pathway is purine metabolism; IMP biosynthesis via de novo pathway; 5-amino-1-(5-phospho-D-ribosyl)imidazole-4-carboxamide from 5-amino-1-(5-phospho-D-ribosyl)imidazole-4-carboxylate: step 1/2. The sequence is that of Phosphoribosylaminoimidazole-succinocarboxamide synthase from Leifsonia xyli subsp. xyli (strain CTCB07).